A 568-amino-acid chain; its full sequence is Vacuolar protein 8 (568 aa).

Glycine 2 carries N-myristoyl glycine lipidation. Residues cysteine 4, cysteine 5, and cysteine 7 are each lipidated (S-palmitoyl cysteine). ARM repeat units lie at residues 37-74 (DKDN…FAEI), 75-114 (TEKY…NLAV), 116-155 (NENK…NLAT), 157-196 (DDNK…NMTH), 198-237 (GENR…NIAV), 241-280 (NRRK…NLAS), 282-321 (TGYQ…NISI), 323-363 (PLNE…NLAA), and 407-446 (DNSK…NLCS).

It belongs to the beta-catenin family.

Its subcellular location is the vacuole membrane. Functions in both vacuole inheritance and protein targeting from the cytoplasm to vacuole. The chain is Vacuolar protein 8 (VAC8) from Eremothecium gossypii (strain ATCC 10895 / CBS 109.51 / FGSC 9923 / NRRL Y-1056) (Yeast).